Here is a 217-residue protein sequence, read N- to C-terminus: Probable transaldolase (217 aa).

The active-site Schiff-base intermediate with substrate is the K83.

The protein belongs to the transaldolase family. Type 3B subfamily.

The protein localises to the cytoplasm. It catalyses the reaction D-sedoheptulose 7-phosphate + D-glyceraldehyde 3-phosphate = D-erythrose 4-phosphate + beta-D-fructose 6-phosphate. The protein operates within carbohydrate degradation; pentose phosphate pathway; D-glyceraldehyde 3-phosphate and beta-D-fructose 6-phosphate from D-ribose 5-phosphate and D-xylulose 5-phosphate (non-oxidative stage): step 2/3. Functionally, transaldolase is important for the balance of metabolites in the pentose-phosphate pathway. The polypeptide is Probable transaldolase (Bartonella tribocorum (strain CIP 105476 / IBS 506)).